The primary structure comprises 283 residues: E3 ubiquitin-protein ligase MARCHF5 (283 aa).

Residues 9 to 78 (VQQMLDRSCW…PQCNAEYLIV (70 aa)) form an RING-CH-type zinc finger. Residues Cys-17, Cys-20, Cys-36, Cys-38, His-46, Cys-49, Cys-68, and Cys-71 each coordinate Zn(2+). A run of 4 helical transmembrane segments spans residues 102-122 (FAAA…YGAV), 142-162 (PLFL…GKMI), 212-232 (ILCG…LMFS), and 241-261 (TILG…YFKQ).

It localises to the mitochondrion outer membrane. It is found in the endoplasmic reticulum membrane. It catalyses the reaction S-ubiquitinyl-[E2 ubiquitin-conjugating enzyme]-L-cysteine + [acceptor protein]-L-lysine = [E2 ubiquitin-conjugating enzyme]-L-cysteine + N(6)-ubiquitinyl-[acceptor protein]-L-lysine.. The protein operates within protein modification; protein ubiquitination. In terms of biological role, mitochondrial E3 ubiquitin-protein ligase that plays a crucial role in the control of mitochondrial morphology by acting as a positive regulator of mitochondrial fission. May play a role in the prevention of cell senescence acting as a regulator of mitochondrial quality control. This Xenopus laevis (African clawed frog) protein is E3 ubiquitin-protein ligase MARCHF5 (marchf5).